The sequence spans 110 residues: Multidrug transporter PA4990 (110 aa).

4 helical membrane-spanning segments follow: residues 7 to 27 (LAIAIAAEVVATTSLKAVAGF), 31 to 51 (LPLLLVVGGYVLAFSMLVLVM), 58 to 78 (VVYAIWSGLGIVLVSLVAMFV), and 85 to 105 (PAALLGIGLIIAGVLVIQLFS).

The protein belongs to the drug/metabolite transporter (DMT) superfamily. Small multidrug resistance (SMR) (TC 2.A.7.1) family.

It localises to the cell membrane. In terms of biological role, confers resistance to ethidium bromide, acriflavine and methyl viologen. This is Multidrug transporter PA4990 from Pseudomonas aeruginosa (strain ATCC 15692 / DSM 22644 / CIP 104116 / JCM 14847 / LMG 12228 / 1C / PRS 101 / PAO1).